The primary structure comprises 1012 residues: Retinoblastoma-related protein (1012 aa).

The tract at residues Thr403–Leu604 is domain A. Positions Thr403 to Pro863 are pocket. Positions Ile605–Glu723 are spacer. A domain B region spans residues Thr724–Pro863. A disordered region spans residues Asn884–Asp905.

Belongs to the retinoblastoma protein (RB) family.

The protein localises to the nucleus. Its function is as follows. Regulator of biological processes that recruits a histone deacetylase to control gene transcription. May play a role in the entry into mitosis, negatively regulating the cell proliferation. Formation of stable complexes with geminiviridae replication-associated proteins may create a cellular environment which favors viral DNA replication. In Oxybasis rubra (Red goosefoot), this protein is Retinoblastoma-related protein (RB).